Consider the following 286-residue polypeptide: Phosphatidylserine decarboxylase proenzyme (286 aa).

Catalysis depends on charge relay system; for autoendoproteolytic cleavage activity residues D90, H147, and S253. The Schiff-base intermediate with substrate; via pyruvic acid; for decarboxylase activity role is filled by S253. S253 carries the pyruvic acid (Ser); by autocatalysis modification.

It belongs to the phosphatidylserine decarboxylase family. PSD-B subfamily. Prokaryotic type I sub-subfamily. As to quaternary structure, heterodimer of a large membrane-associated beta subunit and a small pyruvoyl-containing alpha subunit. Pyruvate is required as a cofactor. In terms of processing, is synthesized initially as an inactive proenzyme. Formation of the active enzyme involves a self-maturation process in which the active site pyruvoyl group is generated from an internal serine residue via an autocatalytic post-translational modification. Two non-identical subunits are generated from the proenzyme in this reaction, and the pyruvate is formed at the N-terminus of the alpha chain, which is derived from the carboxyl end of the proenzyme. The autoendoproteolytic cleavage occurs by a canonical serine protease mechanism, in which the side chain hydroxyl group of the serine supplies its oxygen atom to form the C-terminus of the beta chain, while the remainder of the serine residue undergoes an oxidative deamination to produce ammonia and the pyruvoyl prosthetic group on the alpha chain. During this reaction, the Ser that is part of the protease active site of the proenzyme becomes the pyruvoyl prosthetic group, which constitutes an essential element of the active site of the mature decarboxylase.

The protein resides in the cell membrane. It carries out the reaction a 1,2-diacyl-sn-glycero-3-phospho-L-serine + H(+) = a 1,2-diacyl-sn-glycero-3-phosphoethanolamine + CO2. The protein operates within phospholipid metabolism; phosphatidylethanolamine biosynthesis; phosphatidylethanolamine from CDP-diacylglycerol: step 2/2. In terms of biological role, catalyzes the formation of phosphatidylethanolamine (PtdEtn) from phosphatidylserine (PtdSer). In Pseudoalteromonas atlantica (strain T6c / ATCC BAA-1087), this protein is Phosphatidylserine decarboxylase proenzyme.